We begin with the raw amino-acid sequence, 414 residues long: Imidazolonepropionase (414 aa).

The Fe(3+) site is built by His73 and His75. Zn(2+)-binding residues include His73 and His75. 4-imidazolone-5-propanoate is bound by residues Arg82, Tyr145, and His178. Residue Tyr145 coordinates N-formimidoyl-L-glutamate. His249 is a Fe(3+) binding site. Residue His249 participates in Zn(2+) binding. Gln252 is a binding site for 4-imidazolone-5-propanoate. Asp324 lines the Fe(3+) pocket. Residue Asp324 coordinates Zn(2+). 2 residues coordinate N-formimidoyl-L-glutamate: Asn326 and Gly328. Ser329 is a 4-imidazolone-5-propanoate binding site.

Belongs to the metallo-dependent hydrolases superfamily. HutI family. Zn(2+) is required as a cofactor. The cofactor is Fe(3+).

Its subcellular location is the cytoplasm. It carries out the reaction 4-imidazolone-5-propanoate + H2O = N-formimidoyl-L-glutamate. It functions in the pathway amino-acid degradation; L-histidine degradation into L-glutamate; N-formimidoyl-L-glutamate from L-histidine: step 3/3. Catalyzes the hydrolytic cleavage of the carbon-nitrogen bond in imidazolone-5-propanoate to yield N-formimidoyl-L-glutamate. It is the third step in the universal histidine degradation pathway. In Shewanella pealeana (strain ATCC 700345 / ANG-SQ1), this protein is Imidazolonepropionase.